The sequence spans 227 residues: 7-cyano-7-deazaguanine synthase (227 aa).

7-17 (VSGGMDSLVAT) contacts ATP. Zn(2+) is bound by residues cysteine 187, cysteine 195, cysteine 198, and cysteine 201.

Belongs to the QueC family. Requires Zn(2+) as cofactor.

The catalysed reaction is 7-carboxy-7-deazaguanine + NH4(+) + ATP = 7-cyano-7-deazaguanine + ADP + phosphate + H2O + H(+). It functions in the pathway purine metabolism; 7-cyano-7-deazaguanine biosynthesis. Functionally, catalyzes the ATP-dependent conversion of 7-carboxy-7-deazaguanine (CDG) to 7-cyano-7-deazaguanine (preQ(0)). The protein is 7-cyano-7-deazaguanine synthase of Chlorobaculum parvum (strain DSM 263 / NCIMB 8327) (Chlorobium vibrioforme subsp. thiosulfatophilum).